The sequence spans 604 residues: Protein hemingway (604 aa).

4 disordered regions span residues 1–70, 103–309, 359–387, and 544–585; these read MSGA…GNPH, NQLS…PTSQ, SDRR…GGGI, and TIKA…IDLD. Acidic residues-rich tracts occupy residues 8–38, 135–183, 194–214, and 288–300; these read SDEE…YIEP, EDEA…DDAQ, DDSD…EDEP, and EEPE…EENQ. Positions 368–379 are enriched in low complexity; the sequence is EMSSMTETTMTS.

This sequence belongs to the CFAP97 family. In terms of tissue distribution, detected in ciliated sensory neurons at all stages of development, and in adult testis.

The protein resides in the cell projection. It is found in the cilium. Its subcellular location is the perikaryon. The protein localises to the cytoplasm. Its function is as follows. Involved in assembly and/or maintenance of motile cilia. Required during spermatogenesis for axoneme elongation. Necessary for optimal function of the chordotonal (hearing) organs. In Drosophila melanogaster (Fruit fly), this protein is Protein hemingway.